Reading from the N-terminus, the 232-residue chain is Pyridoxal 5'-phosphate synthase subunit PdxS (232 aa).

K23 acts as the Schiff-base intermediate with D-ribose 5-phosphate in catalysis. G95 contributes to the D-ribose 5-phosphate binding site. D-glyceraldehyde 3-phosphate is bound at residue R107. D-ribose 5-phosphate contacts are provided by residues G156 and 177–178 (GS).

It belongs to the PdxS/SNZ family. As to quaternary structure, in the presence of PdxT, forms a dodecamer of heterodimers.

The enzyme catalyses aldehydo-D-ribose 5-phosphate + D-glyceraldehyde 3-phosphate + L-glutamine = pyridoxal 5'-phosphate + L-glutamate + phosphate + 3 H2O + H(+). Its pathway is cofactor biosynthesis; pyridoxal 5'-phosphate biosynthesis. Catalyzes the formation of pyridoxal 5'-phosphate from ribose 5-phosphate (RBP), glyceraldehyde 3-phosphate (G3P) and ammonia. The ammonia is provided by the PdxT subunit. Can also use ribulose 5-phosphate and dihydroxyacetone phosphate as substrates, resulting from enzyme-catalyzed isomerization of RBP and G3P, respectively. The sequence is that of Pyridoxal 5'-phosphate synthase subunit PdxS from Clostridium novyi.